Consider the following 420-residue polypeptide: Probable glucuronosyltransferase Os04g0398600 (420 aa).

Residues 1–4 lie on the Cytoplasmic side of the membrane; sequence MGSR. Residues 5-25 traverse the membrane as a helical; Signal-anchor for type II membrane protein segment; the sequence is TVGWWLLAAAVVLAAAAADSG. At 26–420 the chain is on the lumenal side; sequence EAERAAEQHS…AGPVGDLKAW (395 aa). N-linked (GlcNAc...) asparagine glycosylation is found at Asn147 and Asn408.

Belongs to the glycosyltransferase 47 family.

It localises to the golgi apparatus membrane. Functionally, involved in the synthesis of glucuronoxylan hemicellulose in secondary cell walls. The polypeptide is Probable glucuronosyltransferase Os04g0398600 (Oryza sativa subsp. japonica (Rice)).